Here is a 203-residue protein sequence, read N- to C-terminus: Alpha-amylase/subtilisin inhibitor (203 aa).

The segment covering 1–12 (MGSRRAGSSSSP) has biased composition (polar residues). An N-terminal signal peptide occupies residues 1-22 (MGSRRAGSSSSPLFWPAPPSRA). A disordered region spans residues 1–34 (MGSRRAGSSSSPLFWPAPPSRAADPPPVHDTDGH). Residues 15-26 (WPAPPSRAADPP) show a composition bias toward pro residues. 2 cysteine pairs are disulfide-bonded: cysteine 65–cysteine 112 and cysteine 166–cysteine 170.

Belongs to the protease inhibitor I3 (leguminous Kunitz-type inhibitor) family.

This protein inhibits independently subtilisin and alpha-amylase. The sequence is that of Alpha-amylase/subtilisin inhibitor from Hordeum vulgare (Barley).